A 167-amino-acid polypeptide reads, in one-letter code: Ubiquitin-fold modifier-conjugating enzyme 1 (167 aa).

Catalysis depends on Cys116, which acts as the Glycyl thioester intermediate.

It belongs to the ubiquitin-conjugating enzyme family. UFC1 subfamily.

Functionally, E2-like enzyme which forms an intermediate with UFM1 via a thioester linkage. This is Ubiquitin-fold modifier-conjugating enzyme 1 from Anopheles gambiae (African malaria mosquito).